The following is a 338-amino-acid chain: Ketol-acid reductoisomerase (NADP(+)) (338 aa).

The 181-residue stretch at 1–181 (MKVFYDKDCD…GGGRTGIIET (181 aa)) folds into the KARI N-terminal Rossmann domain. NADP(+)-binding positions include 24–27 (YGSQ), Arg-47, Ser-50, Thr-52, and 82–85 (DEFQ). The active site involves His-107. Gly-133 lines the NADP(+) pocket. The 146-residue stretch at 182–327 (TFKDETETDL…EQLRSMMPWI (146 aa)) folds into the KARI C-terminal knotted domain. The Mg(2+) site is built by Asp-190, Glu-194, Glu-226, and Glu-230. Ser-251 lines the substrate pocket.

The protein belongs to the ketol-acid reductoisomerase family. Mg(2+) serves as cofactor.

The catalysed reaction is (2R)-2,3-dihydroxy-3-methylbutanoate + NADP(+) = (2S)-2-acetolactate + NADPH + H(+). It catalyses the reaction (2R,3R)-2,3-dihydroxy-3-methylpentanoate + NADP(+) = (S)-2-ethyl-2-hydroxy-3-oxobutanoate + NADPH + H(+). The protein operates within amino-acid biosynthesis; L-isoleucine biosynthesis; L-isoleucine from 2-oxobutanoate: step 2/4. It participates in amino-acid biosynthesis; L-valine biosynthesis; L-valine from pyruvate: step 2/4. Involved in the biosynthesis of branched-chain amino acids (BCAA). Catalyzes an alkyl-migration followed by a ketol-acid reduction of (S)-2-acetolactate (S2AL) to yield (R)-2,3-dihydroxy-isovalerate. In the isomerase reaction, S2AL is rearranged via a Mg-dependent methyl migration to produce 3-hydroxy-3-methyl-2-ketobutyrate (HMKB). In the reductase reaction, this 2-ketoacid undergoes a metal-dependent reduction by NADPH to yield (R)-2,3-dihydroxy-isovalerate. The chain is Ketol-acid reductoisomerase (NADP(+)) from Pseudomonas entomophila (strain L48).